A 309-amino-acid polypeptide reads, in one-letter code: MKKLGFLSLLLLAVCTLFACSNQKNASSDSSKLKVVATNSIIADITKNIAGDKIDLHSIVPVGKDPHEYEPLPEDVKKTSQADLIFYNGINLETGGNAWFTKLVKNANKEENKDYYAVSDGVDVIYLEGQSEKGKEDPHAWLNLENGIIYAQNIAKRLIEKDPDNKATYEKNLKAYVEKLTALDKEAKEKFNNIPEEKKMIVTSEGCFKYFSKAYNVPSAYIWEINTEEEGTPDQIKSLVEKLRKTKVPSLFVESSVDDRPMKTVSKDTNIPIHAKIFTDSIADQGEEGDTYYSMMKYNLDKISEGLAK.

Residues 1–19 form the signal peptide; that stretch reads MKKLGFLSLLLLAVCTLFA. Residue Cys-20 is the site of N-palmitoyl cysteine attachment. Cys-20 is lipidated: S-diacylglycerol cysteine. His-67, His-139, Glu-205, and Asp-280 together coordinate a divalent metal cation.

The protein belongs to the bacterial solute-binding protein 9 family. Lipoprotein receptor antigen (Lrai) subfamily. As to quaternary structure, homodimer and homotrimer.

It is found in the cell membrane. Functionally, part of an ATP-binding cassette (ABC) transport system involved in metal import. Binds a metal with high affinity and specificity and delivers it to the membrane permease for translocation into the cytoplasm. Also acts as an adhesin which is involved on adherence to extracellular matrix. It is an important factor in the pathogenesis and infection. May contribute to the formation and accumulation of dental plaque. The sequence is that of Metal ABC transporter substrate-binding lipoprotein SsaB (ssaB) from Streptococcus sanguinis.